A 272-amino-acid polypeptide reads, in one-letter code: Putative phosphoenolpyruvate synthase regulatory protein (272 aa).

152 to 159 (GVSRSGKT) is a binding site for ADP.

The protein belongs to the pyruvate, phosphate/water dikinase regulatory protein family. PSRP subfamily.

It carries out the reaction [pyruvate, water dikinase] + ADP = [pyruvate, water dikinase]-phosphate + AMP + H(+). The catalysed reaction is [pyruvate, water dikinase]-phosphate + phosphate + H(+) = [pyruvate, water dikinase] + diphosphate. Bifunctional serine/threonine kinase and phosphorylase involved in the regulation of the phosphoenolpyruvate synthase (PEPS) by catalyzing its phosphorylation/dephosphorylation. This chain is Putative phosphoenolpyruvate synthase regulatory protein, found in Hahella chejuensis (strain KCTC 2396).